The following is a 1597-amino-acid chain: Pentafunctional AROM polypeptide (1597 aa).

Positions 1 to 384 are 3-dehydroquinate synthase; it reads MGVPTKISIL…HEPRASTVSN (384 aa). NAD(+)-binding positions include 44 to 46, 81 to 84, 114 to 116, and D119; these read DTN, ESSK, and GGV. Residue R130 participates in 7-phospho-2-dehydro-3-deoxy-D-arabino-heptonate binding. NAD(+) is bound at residue 139–140; that stretch reads TT. Residues D146 and K152 each contribute to the 7-phospho-2-dehydro-3-deoxy-D-arabino-heptonate site. Position 161 (K161) interacts with NAD(+). N162 is a 7-phospho-2-dehydro-3-deoxy-D-arabino-heptonate binding site. Residues 179–182 and N190 contribute to the NAD(+) site; that span reads FLNT. E194 serves as a coordination point for Zn(2+). 7-phospho-2-dehydro-3-deoxy-D-arabino-heptonate is bound by residues 194–197 and K250; that span reads EVIK. E260 functions as the Proton acceptor; for 3-dehydroquinate synthase activity in the catalytic mechanism. Residues 264 to 268 and H271 each bind 7-phospho-2-dehydro-3-deoxy-D-arabino-heptonate; that span reads RNLLN. Position 271 (H271) interacts with Zn(2+). H275 (proton acceptor; for 3-dehydroquinate synthase activity) is an active-site residue. Positions 287 and 356 each coordinate 7-phospho-2-dehydro-3-deoxy-D-arabino-heptonate. Residue H287 participates in Zn(2+) binding. Positions 397-842 are EPSP synthase; the sequence is VSPGVPKNLN…WDSLAQTFKV (446 aa). The active-site For EPSP synthase activity is C824. The segment at 866–1057 is shikimate kinase; sequence ASIFIIGMRG…RSKENTFFVS (192 aa). 872 to 879 serves as a coordination point for ATP; the sequence is GMRGAGKT. The 3-dehydroquinase stretch occupies residues 1058 to 1278; it reads LTLPDLAPAA…AAPGQLSARE (221 aa). H1181 functions as the Proton acceptor; for 3-dehydroquinate dehydratase activity in the catalytic mechanism. K1209 acts as the Schiff-base intermediate with substrate; for 3-dehydroquinate dehydratase activity in catalysis. The segment at 1291-1597 is shikimate dehydrogenase; the sequence is SKKFAVIGNP…VQPKDDDIST (307 aa).

The protein in the N-terminal section; belongs to the sugar phosphate cyclases superfamily. Dehydroquinate synthase family. In the 2nd section; belongs to the EPSP synthase family. This sequence in the 3rd section; belongs to the shikimate kinase family. It in the 4th section; belongs to the type-I 3-dehydroquinase family. The protein in the C-terminal section; belongs to the shikimate dehydrogenase family. As to quaternary structure, homodimer. The cofactor is Zn(2+).

It localises to the cytoplasm. It catalyses the reaction 7-phospho-2-dehydro-3-deoxy-D-arabino-heptonate = 3-dehydroquinate + phosphate. It carries out the reaction 3-dehydroquinate = 3-dehydroshikimate + H2O. The catalysed reaction is shikimate + NADP(+) = 3-dehydroshikimate + NADPH + H(+). The enzyme catalyses shikimate + ATP = 3-phosphoshikimate + ADP + H(+). It catalyses the reaction 3-phosphoshikimate + phosphoenolpyruvate = 5-O-(1-carboxyvinyl)-3-phosphoshikimate + phosphate. Its pathway is metabolic intermediate biosynthesis; chorismate biosynthesis; chorismate from D-erythrose 4-phosphate and phosphoenolpyruvate: step 2/7. It participates in metabolic intermediate biosynthesis; chorismate biosynthesis; chorismate from D-erythrose 4-phosphate and phosphoenolpyruvate: step 3/7. The protein operates within metabolic intermediate biosynthesis; chorismate biosynthesis; chorismate from D-erythrose 4-phosphate and phosphoenolpyruvate: step 4/7. It functions in the pathway metabolic intermediate biosynthesis; chorismate biosynthesis; chorismate from D-erythrose 4-phosphate and phosphoenolpyruvate: step 5/7. Its pathway is metabolic intermediate biosynthesis; chorismate biosynthesis; chorismate from D-erythrose 4-phosphate and phosphoenolpyruvate: step 6/7. In terms of biological role, the AROM polypeptide catalyzes 5 consecutive enzymatic reactions in prechorismate polyaromatic amino acid biosynthesis. The sequence is that of Pentafunctional AROM polypeptide from Blastomyces gilchristii (strain SLH14081) (Blastomyces dermatitidis).